The sequence spans 362 residues: MNHYLFSESLMEQLKTLSTSWSLPVAAVVAAIGIFATMGLFSSKNHMPVEGRTVLLTGASEGMGRSAAIQLSQKGANVILVSRNVGRLEEALVDVRAAAKNPSTQRFTYISADVSEHDYAAAVLAEAIAWNGGRSPDIVWCVAGMSTPLLWTDDGSMAAARRNMDVNYFGSAEMSRAILREWLAPENSTGPNGEPKHLVFTASMLALFAILGYGPYTPTKWALRGLADTLAMEVNYYPDNPVKVHIVYPGTIVSPGYERENQTKPDITVELEKDEPAESPDTVARRAIAGLEAGKYFVDVSFLGRLMQCGIMGGSPRNNWVLDTLMGWLIPIIYFFVLRGMNSTIVKWAREKGHPFTHPKKK.

Leu-55 serves as a coordination point for NADP(+). NADPH-binding residues include Gly-58, Ser-60, Gly-62, and Arg-83. A GXSXG motif is present at residues 58–62; sequence GASEG. Asn-84 lines the NADP(+) pocket. NADPH contacts are provided by Arg-87 and Asp-113. NADP(+) is bound by residues Asp-113, Arg-176, Tyr-216, Lys-220, Ile-252, and Ser-254. Tyr-216 (proton acceptor) is an active-site residue. The Lowers pKa of active site Tyr role is filled by Lys-220. A helical membrane pass occupies residues 318 to 338; the sequence is NNWVLDTLMGWLIPIIYFFVL.

It belongs to the short-chain dehydrogenases/reductases (SDR) family.

It localises to the endoplasmic reticulum membrane. The catalysed reaction is sphinganine + NADP(+) = 3-oxosphinganine + NADPH + H(+). It participates in lipid metabolism; sphingolipid metabolism. Its function is as follows. Catalyzes the reduction of 3'-oxosphinganine (3-ketodihydrosphingosine/KDS) to sphinganine (dihydrosphingosine/DHS), the second step of de novo sphingolipid biosynthesis. The polypeptide is 3-ketodihydrosphingosine reductase gsl-3 (gsl-3) (Neurospora crassa (strain ATCC 24698 / 74-OR23-1A / CBS 708.71 / DSM 1257 / FGSC 987)).